Consider the following 838-residue polypeptide: Probable beta-glucosidase I (838 aa).

Asn-197 carries an N-linked (GlcNAc...) asparagine glycan. Asp-225 is a catalytic residue. The PA14 domain maps to 395-555 (DGKKGFKFRV…SQEELISKAA (161 aa)). N-linked (GlcNAc...) asparagine glycosylation occurs at Asn-493.

Belongs to the glycosyl hydrolase 3 family.

Its subcellular location is the secreted. It catalyses the reaction Hydrolysis of terminal, non-reducing beta-D-glucosyl residues with release of beta-D-glucose.. It functions in the pathway glycan metabolism; cellulose degradation. Its function is as follows. Beta-glucosidases are one of a number of cellulolytic enzymes involved in the degradation of cellulosic biomass. Catalyzes the last step releasing glucose from the inhibitory cellobiose. The sequence is that of Probable beta-glucosidase I (bglI) from Aspergillus fumigatus (strain ATCC MYA-4609 / CBS 101355 / FGSC A1100 / Af293) (Neosartorya fumigata).